A 97-amino-acid chain; its full sequence is Co-chaperonin GroES (97 aa).

This sequence belongs to the GroES chaperonin family. In terms of assembly, heptamer of 7 subunits arranged in a ring. Interacts with the chaperonin GroEL.

The protein localises to the cytoplasm. Together with the chaperonin GroEL, plays an essential role in assisting protein folding. The GroEL-GroES system forms a nano-cage that allows encapsulation of the non-native substrate proteins and provides a physical environment optimized to promote and accelerate protein folding. GroES binds to the apical surface of the GroEL ring, thereby capping the opening of the GroEL channel. The sequence is that of Co-chaperonin GroES from Buchnera aphidicola subsp. Thelaxes suberi.